We begin with the raw amino-acid sequence, 141 residues long: Auxin-responsive protein SAUR61 (141 aa).

This sequence belongs to the ARG7 family.

It localises to the cell membrane. May promote auxin-stimulated organ elongation, such as hypocotyls, stamen filaments and petals. The protein is Auxin-responsive protein SAUR61 of Arabidopsis thaliana (Mouse-ear cress).